The chain runs to 143 residues: Acetyltransferase plu1384 (143 aa).

The N-acetyltransferase domain maps to 1 to 138; the sequence is MEIRVFRQDD…ESVIFSKRLI (138 aa).

Belongs to the acetyltransferase family. YpeA subfamily.

The sequence is that of Acetyltransferase plu1384 from Photorhabdus laumondii subsp. laumondii (strain DSM 15139 / CIP 105565 / TT01) (Photorhabdus luminescens subsp. laumondii).